A 250-amino-acid polypeptide reads, in one-letter code: 3-deoxy-manno-octulosonate cytidylyltransferase (250 aa).

Belongs to the KdsB family.

The protein localises to the cytoplasm. It carries out the reaction 3-deoxy-alpha-D-manno-oct-2-ulosonate + CTP = CMP-3-deoxy-beta-D-manno-octulosonate + diphosphate. Its pathway is nucleotide-sugar biosynthesis; CMP-3-deoxy-D-manno-octulosonate biosynthesis; CMP-3-deoxy-D-manno-octulosonate from 3-deoxy-D-manno-octulosonate and CTP: step 1/1. The protein operates within bacterial outer membrane biogenesis; lipopolysaccharide biosynthesis. Activates KDO (a required 8-carbon sugar) for incorporation into bacterial lipopolysaccharide in Gram-negative bacteria. In Francisella tularensis subsp. holarctica (strain LVS), this protein is 3-deoxy-manno-octulosonate cytidylyltransferase.